Reading from the N-terminus, the 431-residue chain is Adenylosuccinate synthetase (431 aa).

Residues 12-18 (GDEGKGK) and 40-42 (GHT) each bind GTP. The active-site Proton acceptor is the Asp-13. The Mg(2+) site is built by Asp-13 and Gly-40. Residues 13–16 (DEGK), 38–41 (NAGH), Thr-131, Arg-145, Gln-225, Thr-240, and Arg-304 each bind IMP. His-41 serves as the catalytic Proton donor. 300 to 306 (VNTGRRR) lines the substrate pocket. GTP contacts are provided by residues Arg-306, 332-334 (KLD), and 414-416 (STS).

This sequence belongs to the adenylosuccinate synthetase family. As to quaternary structure, homodimer. Requires Mg(2+) as cofactor.

The protein resides in the cytoplasm. It carries out the reaction IMP + L-aspartate + GTP = N(6)-(1,2-dicarboxyethyl)-AMP + GDP + phosphate + 2 H(+). It participates in purine metabolism; AMP biosynthesis via de novo pathway; AMP from IMP: step 1/2. Its function is as follows. Plays an important role in the de novo pathway of purine nucleotide biosynthesis. Catalyzes the first committed step in the biosynthesis of AMP from IMP. The polypeptide is Adenylosuccinate synthetase (Beijerinckia indica subsp. indica (strain ATCC 9039 / DSM 1715 / NCIMB 8712)).